The primary structure comprises 99 residues: Ferredoxin, heterocyst (99 aa).

Residues 4 to 96 (YQVRLINKKE…NCTIKTHQEP (93 aa)) enclose the 2Fe-2S ferredoxin-type domain. [2Fe-2S] cluster is bound by residues Cys42, Cys47, Cys50, and Cys80.

This sequence belongs to the 2Fe2S plant-type ferredoxin family. [2Fe-2S] cluster is required as a cofactor.

Ferredoxins are iron-sulfur proteins that transfer electrons in a wide variety of metabolic reactions. The sequence is that of Ferredoxin, heterocyst (fdxH) from Microchaete diplosiphon (Fremyella diplosiphon).